The sequence spans 262 residues: MGYLKRFALYISVMILIFAIAGCGKGNETKEDSKEEQIKKSFAKTLDMYPIKNLEDLYDKEGYRDGEFKKGDKGMWTIYTDFAKSNKQGGLSNEGMVLYLDRNTRTAKGHYFVKTFYNKGKFPDRKNYKVEMKNNKIILLDKVEDTNLKKRIENFKFFGQYANLKELKNYNNGDVSINENVPSYDAKFKMSNKDENVKQLRSRYNIPTDKAPVLKMHIDGNLKGSSVGYKKLEIDFSKGGKSDLSVIDSLNFQPAKVDEDDE.

The first 22 residues, 1–22, serve as a signal peptide directing secretion; the sequence is MGYLKRFALYISVMILIFAIAG. C23 carries N-palmitoyl cysteine lipidation. A lipid anchor (S-diacylglycerol cysteine) is attached at C23.

The protein belongs to the staphylococcal tandem lipoprotein family.

The protein resides in the cell membrane. This is an uncharacterized protein from Staphylococcus aureus (strain NCTC 8325 / PS 47).